Here is a 459-residue protein sequence, read N- to C-terminus: Vacuolar amino acid transporter 5 (459 aa).

8 helical membrane-spanning segments follow: residues 8–28 (GVLTLLHTACGAGVLAMPFAF), 33–53 (LMPGLITLTFCGICSLCGLLL), 82–102 (VVFDFAIAVKCFGVGVSYLII), 131–151 (FLDRRLYITLIIVFVISPLCF), 161–181 (ASMIAIVSVAYLSGLIIYHFV), 206–226 (LTTLPIFVFAYTCHHNMFSVI), 240–260 (IPIFAIVLAYFLYIIIGGTGY), and 278–298 (SISTTIGRLAMLLLVMLAFPL). Residues 335–351 (FNSEDPQEAPTQQNNEE) show a composition bias toward polar residues. The disordered stretch occupies residues 335–354 (FNSEDPQEAPTQQNNEEPNL). The next 3 helical transmembrane spans lie at 364 to 384 (IITLCILLFSYLLAISITSLA), 386 to 406 (VLAIVGATGSTSISFILPGLF), and 434 to 454 (LSLFIWGIAVMVASLSAIVFL).

It belongs to the amino acid/polyamine transporter 2 family.

The protein resides in the vacuole membrane. In terms of biological role, probable amino acid transporter of unknown specificity. The protein is Vacuolar amino acid transporter 5 (AVT5) of Saccharomyces cerevisiae (strain ATCC 204508 / S288c) (Baker's yeast).